The chain runs to 226 residues: Deoxyribose-phosphate aldolase (226 aa).

The active-site Proton donor/acceptor is D96. The Schiff-base intermediate with acetaldehyde role is filled by K157. K185 acts as the Proton donor/acceptor in catalysis.

It belongs to the DeoC/FbaB aldolase family. DeoC type 1 subfamily.

Its subcellular location is the cytoplasm. The enzyme catalyses 2-deoxy-D-ribose 5-phosphate = D-glyceraldehyde 3-phosphate + acetaldehyde. It participates in carbohydrate degradation; 2-deoxy-D-ribose 1-phosphate degradation; D-glyceraldehyde 3-phosphate and acetaldehyde from 2-deoxy-alpha-D-ribose 1-phosphate: step 2/2. Functionally, catalyzes a reversible aldol reaction between acetaldehyde and D-glyceraldehyde 3-phosphate to generate 2-deoxy-D-ribose 5-phosphate. The chain is Deoxyribose-phosphate aldolase from Trichormus variabilis (strain ATCC 29413 / PCC 7937) (Anabaena variabilis).